A 73-amino-acid chain; its full sequence is Aldehyde dehydrogenase (73 aa).

Belongs to the aldehyde dehydrogenase family.

It carries out the reaction an aldehyde + NAD(+) + H2O = a carboxylate + NADH + 2 H(+). It functions in the pathway alcohol metabolism; ethanol degradation; acetate from ethanol: step 2/2. The chain is Aldehyde dehydrogenase from Geobacillus stearothermophilus (Bacillus stearothermophilus).